The chain runs to 123 residues: Dormancy-associated protein homolog 4 (123 aa).

The tract at residues 7–86 (LWDETVAGPT…NPGTPLTPGT (80 aa)) is disordered. A compositionally biased stretch (low complexity) spans 30 to 46 (LSTVRSSPPSLSSDQVT). Composition is skewed to polar residues over residues 47-58 (RSIMVTKGNNNV) and 71-80 (PTCSSSNPGT). Ser-74 carries the phosphoserine modification.

Belongs to the DRM1/ARP family.

The chain is Dormancy-associated protein homolog 4 from Arabidopsis thaliana (Mouse-ear cress).